The primary structure comprises 253 residues: Triosephosphate isomerase (253 aa).

Residue 9–11 participates in substrate binding; sequence NWK. The active-site Electrophile is the His-95. Glu-167 serves as the catalytic Proton acceptor. Residues Gly-173, Ser-213, and 234 to 235 contribute to the substrate site; that span reads GG. Residue Ser-213 is modified to Phosphoserine.

It belongs to the triosephosphate isomerase family. Homodimer.

The protein resides in the cytoplasm. The catalysed reaction is D-glyceraldehyde 3-phosphate = dihydroxyacetone phosphate. It functions in the pathway carbohydrate biosynthesis; gluconeogenesis. The protein operates within carbohydrate degradation; glycolysis; D-glyceraldehyde 3-phosphate from glycerone phosphate: step 1/1. Its function is as follows. Involved in the gluconeogenesis. Catalyzes stereospecifically the conversion of dihydroxyacetone phosphate (DHAP) to D-glyceraldehyde-3-phosphate (G3P). The polypeptide is Triosephosphate isomerase (Bacillus subtilis (strain 168)).